A 309-amino-acid polypeptide reads, in one-letter code: tRNA dimethylallyltransferase (309 aa).

13 to 20 (GPTAVGKS) contacts ATP. 15 to 20 (TAVGKS) contacts substrate.

Belongs to the IPP transferase family. As to quaternary structure, monomer. The cofactor is Mg(2+).

It carries out the reaction adenosine(37) in tRNA + dimethylallyl diphosphate = N(6)-dimethylallyladenosine(37) in tRNA + diphosphate. Catalyzes the transfer of a dimethylallyl group onto the adenine at position 37 in tRNAs that read codons beginning with uridine, leading to the formation of N6-(dimethylallyl)adenosine (i(6)A). This Lacticaseibacillus casei (strain BL23) (Lactobacillus casei) protein is tRNA dimethylallyltransferase.